We begin with the raw amino-acid sequence, 507 residues long: Fumarate hydratase, mitochondrial (507 aa).

Residues 1-41 constitute a mitochondrion transit peptide; the sequence is MYRALRLLARSRRLLRVPSAGAAVSGEATTLPRCAPNVARM. Lys58, Lys63, and Lys77 each carry N6-acetyllysine; alternate. An N6-succinyllysine; alternate mark is found at Lys58, Lys63, and Lys77. At Thr82 the chain carries Phosphothreonine. N6-acetyllysine; alternate is present on residues Lys112 and Lys119. Residues Lys112 and Lys119 each carry the N6-succinyllysine; alternate modification. Substrate-binding positions include 142–144, 173–176, and 183–185; these read SGT, HPND, and SSN. The residue at position 210 (Lys210) is an N6-acetyllysine. At Lys220 the chain carries N6-acetyllysine; alternate. Lys220 bears the N6-succinyllysine; alternate mark. Substrate is bound at residue Thr231. Catalysis depends on His232, which acts as the Proton donor/acceptor. Thr233 carries the phosphothreonine modification. Lys289 carries the N6-acetyllysine; alternate modification. Lys289 carries the post-translational modification N6-succinyllysine; alternate. Ser362 is a catalytic residue. Substrate contacts are provided by residues Ser363 and 368–370; that span reads KVN. Position 363 is a phosphoserine (Ser363). Residues Lys464 and Lys470 each carry the N6-succinyllysine modification. Lys499 is subject to N6-acetyllysine.

This sequence belongs to the class-II fumarase/aspartase family. Fumarase subfamily. Homotetramer. Interacts with H2AZ1. Phosphorylation at Thr-233 by PRKDC in response to DNA damage promotes translocation to the nucleus and recruitment to DNA double-strand breaks (DSBs).

The protein localises to the mitochondrion. Its subcellular location is the cytoplasm. The protein resides in the cytosol. It is found in the nucleus. It localises to the chromosome. It carries out the reaction (S)-malate = fumarate + H2O. It functions in the pathway carbohydrate metabolism; tricarboxylic acid cycle; (S)-malate from fumarate: step 1/1. In terms of biological role, catalyzes the reversible stereospecific interconversion of fumarate to L-malate. Experiments in different species have demonstrated that specific isoforms of this protein act in defined pathways and favor one direction over the other. Catalyzes the hydration of fumarate to L-malate in the tricarboxylic acid (TCA) cycle to facilitate a transition step in the production of energy in the form of NADH. Its function is as follows. Catalyzes the dehydration of L-malate to fumarate. Fumarate metabolism in the cytosol plays a role during urea cycle and arginine metabolism; fumarate being a by-product of the urea cycle and amino-acid catabolism. Also plays a role in DNA repair by promoting non-homologous end-joining (NHEJ). In response to DNA damage and phosphorylation by PRKDC, translocates to the nucleus and accumulates at DNA double-strand breaks (DSBs): acts by catalyzing formation of fumarate, an inhibitor of KDM2B histone demethylase activity, resulting in enhanced dimethylation of histone H3 'Lys-36' (H3K36me2). The polypeptide is Fumarate hydratase, mitochondrial (Mus musculus (Mouse)).